The sequence spans 210 residues: Large ribosomal subunit protein uL3 (210 aa).

Residues 122 to 155 (NQKRNNFGRGPMSHGSKNHRAPGSIGAGTTPGRV) form a disordered region.

This sequence belongs to the universal ribosomal protein uL3 family. Part of the 50S ribosomal subunit. Forms a cluster with proteins L14 and L19.

In terms of biological role, one of the primary rRNA binding proteins, it binds directly near the 3'-end of the 23S rRNA, where it nucleates assembly of the 50S subunit. The sequence is that of Large ribosomal subunit protein uL3 from Nostoc punctiforme (strain ATCC 29133 / PCC 73102).